The primary structure comprises 67 residues: Sodium channel neurotoxin MeuNaTxalpha-10 (67 aa).

An LCN-type CS-alpha/beta domain is found at 2–66 (RDGYIAKPHN…VPIRIPGKCH (65 aa)). 4 disulfides stabilise this stretch: C12-C65, C16-C38, C24-C48, and C28-C50. A propeptide (removed by a carboxypeptidase) is located at residue R67.

This sequence belongs to the long (4 C-C) scorpion toxin superfamily. Sodium channel inhibitor family. Alpha subfamily. Expressed by the venom gland.

Its subcellular location is the secreted. Functionally, alpha toxins bind voltage-independently at site-3 of sodium channels (Nav) and inhibit the inactivation of the activated channels, thereby blocking neuronal transmission. The sequence is that of Sodium channel neurotoxin MeuNaTxalpha-10 from Mesobuthus eupeus (Lesser Asian scorpion).